Reading from the N-terminus, the 313-residue chain is Porphobilinogen deaminase (313 aa).

Cys-242 bears the S-(dipyrrolylmethanemethyl)cysteine mark.

It belongs to the HMBS family. Monomer. Requires dipyrromethane as cofactor.

The catalysed reaction is 4 porphobilinogen + H2O = hydroxymethylbilane + 4 NH4(+). Its pathway is porphyrin-containing compound metabolism; protoporphyrin-IX biosynthesis; coproporphyrinogen-III from 5-aminolevulinate: step 2/4. Functionally, tetrapolymerization of the monopyrrole PBG into the hydroxymethylbilane pre-uroporphyrinogen in several discrete steps. This Pseudomonas aeruginosa (strain UCBPP-PA14) protein is Porphobilinogen deaminase.